Here is a 339-residue protein sequence, read N- to C-terminus: Heat-inducible transcription repressor HrcA (339 aa).

The protein belongs to the HrcA family.

In terms of biological role, negative regulator of class I heat shock genes (grpE-dnaK-dnaJ and groELS operons). Prevents heat-shock induction of these operons. This Paraburkholderia xenovorans (strain LB400) protein is Heat-inducible transcription repressor HrcA.